Consider the following 448-residue polypeptide: Argininosuccinate synthase (448 aa).

ATP-binding positions include 17–25 and alanine 43; that span reads AFSGGLDTS. Tyrosine 99 serves as a coordination point for L-citrulline. The ATP site is built by glycine 129 and threonine 131. Residues threonine 131, asparagine 135, and aspartate 136 each contribute to the L-aspartate site. Asparagine 135 serves as a coordination point for L-citrulline. Aspartate 136 contacts ATP. 2 residues coordinate L-citrulline: arginine 139 and serine 192. Aspartate 194 contacts ATP. Residues threonine 201, glutamate 203, and glutamate 280 each coordinate L-citrulline.

Belongs to the argininosuccinate synthase family. Type 2 subfamily. Homotetramer.

The protein localises to the cytoplasm. The catalysed reaction is L-citrulline + L-aspartate + ATP = 2-(N(omega)-L-arginino)succinate + AMP + diphosphate + H(+). It participates in amino-acid biosynthesis; L-arginine biosynthesis; L-arginine from L-ornithine and carbamoyl phosphate: step 2/3. The protein is Argininosuccinate synthase of Enterobacter sp. (strain 638).